The following is a 130-amino-acid chain: Ribosome biogenesis inhibitor MINAS-60 (130 aa).

Residues 61–130 are disordered; sequence SRVRRIPTRP…RRRRPVTSSC (70 aa). The segment covering 109-130 has biased composition (basic residues); the sequence is KGRRRRRRRMRRRRRRPVTSSC.

As to quaternary structure, interacts with 60S ribosome assembly factors GTPBP4 and MRTO4.

It localises to the nucleus. It is found in the nucleolus. Acts as a late-stage inhibitor of pre-60S ribosome assembly by preventing pre-60S ribosome export from nucleus. In Homo sapiens (Human), this protein is Ribosome biogenesis inhibitor MINAS-60.